A 415-amino-acid polypeptide reads, in one-letter code: Elongation factor Tu, chloroplastic (415 aa).

One can recognise a tr-type G domain in the interval 13-217; sequence KIHLNVGTIG…HLDLYLPTPR (205 aa). Positions 22–29 are G1; the sequence is GHFSHGKT. Residue 22-29 participates in GTP binding; sequence GHFSHGKT. Residue Thr29 participates in Mg(2+) binding. A G2 region spans residues 63–67; it reads NMSIY. Residues 84–87 form a G3 region; it reads DCPG. GTP is bound by residues 84-88 and 139-142; these read DCPGH and NKED. Residues 139–142 form a G4 region; sequence NKED. A G5 region spans residues 177-179; the sequence is SAL.

Belongs to the TRAFAC class translation factor GTPase superfamily. Classic translation factor GTPase family. EF-Tu/EF-1A subfamily.

Its subcellular location is the plastid. The protein resides in the chloroplast. The enzyme catalyses GTP + H2O = GDP + phosphate + H(+). GTP hydrolase that promotes the GTP-dependent binding of aminoacyl-tRNA to the A-site of ribosomes during protein biosynthesis. The sequence is that of Elongation factor Tu, chloroplastic (tufA) from Coleochaete orbicularis (Charophycean green alga).